The sequence spans 365 residues: Putative carbonic anhydrase-like protein 1 (365 aa).

An N-terminal signal peptide occupies residues 1 to 25 (MRFECSHFPLFLIILTCHISPLKSS). The Alpha-carbonic anhydrase domain occupies 28–356 (YQWSYDSDVF…TNNRLVRTNI (329 aa)). The active site involves Tyr223. Substrate contacts are provided by residues Thr295 and 295–296 (TS).

The protein belongs to the alpha-carbonic anhydrase family.

It is found in the secreted. The protein is Putative carbonic anhydrase-like protein 1 (cah-1) of Caenorhabditis elegans.